The primary structure comprises 212 residues: Pyridoxine/pyridoxamine 5'-phosphate oxidase (212 aa).

Substrate contacts are provided by residues 8–11 and Lys66; that span reads RREY. FMN-binding positions include 61-66, 76-77, Arg82, Lys83, and Gln105; these read RIVLLK and FT. Substrate-binding residues include Tyr123, Arg127, and Ser131. Residues 140–141 and Trp185 contribute to the FMN site; that span reads QS. 191 to 193 is a binding site for substrate; that stretch reads RLH. Residue Arg195 coordinates FMN.

The protein belongs to the pyridoxamine 5'-phosphate oxidase family. As to quaternary structure, homodimer. FMN serves as cofactor.

It catalyses the reaction pyridoxamine 5'-phosphate + O2 + H2O = pyridoxal 5'-phosphate + H2O2 + NH4(+). It carries out the reaction pyridoxine 5'-phosphate + O2 = pyridoxal 5'-phosphate + H2O2. It functions in the pathway cofactor metabolism; pyridoxal 5'-phosphate salvage; pyridoxal 5'-phosphate from pyridoxamine 5'-phosphate: step 1/1. It participates in cofactor metabolism; pyridoxal 5'-phosphate salvage; pyridoxal 5'-phosphate from pyridoxine 5'-phosphate: step 1/1. Catalyzes the oxidation of either pyridoxine 5'-phosphate (PNP) or pyridoxamine 5'-phosphate (PMP) into pyridoxal 5'-phosphate (PLP). The protein is Pyridoxine/pyridoxamine 5'-phosphate oxidase of Shewanella halifaxensis (strain HAW-EB4).